The primary structure comprises 455 residues: Ribulose bisphosphate carboxylase large chain (455 aa).

Position 5 is an N6,N6,N6-trimethyllysine (K5). Positions 114 and 164 each coordinate substrate. K166 (proton acceptor) is an active-site residue. Residue K168 participates in substrate binding. Positions 192, 194, and 195 each coordinate Mg(2+). N6-carboxylysine is present on K192. H285 functions as the Proton acceptor in the catalytic mechanism. Substrate contacts are provided by R286, H318, and S370.

This sequence belongs to the RuBisCO large chain family. Type I subfamily. In terms of assembly, heterohexadecamer of 8 large chains and 8 small chains; disulfide-linked. The disulfide link is formed within the large subunit homodimers. Mg(2+) serves as cofactor. The disulfide bond which can form in the large chain dimeric partners within the hexadecamer appears to be associated with oxidative stress and protein turnover.

It is found in the plastid. The protein resides in the chloroplast. The enzyme catalyses 2 (2R)-3-phosphoglycerate + 2 H(+) = D-ribulose 1,5-bisphosphate + CO2 + H2O. It carries out the reaction D-ribulose 1,5-bisphosphate + O2 = 2-phosphoglycolate + (2R)-3-phosphoglycerate + 2 H(+). In terms of biological role, ruBisCO catalyzes two reactions: the carboxylation of D-ribulose 1,5-bisphosphate, the primary event in carbon dioxide fixation, as well as the oxidative fragmentation of the pentose substrate in the photorespiration process. Both reactions occur simultaneously and in competition at the same active site. The polypeptide is Ribulose bisphosphate carboxylase large chain (Lupinus arcticus (Arctic lupine)).